The sequence spans 201 residues: GTP cyclohydrolase 1 (201 aa).

The segment at 1 to 20 is disordered; the sequence is MDATVKKMSPETSRPSREEA. Zn(2+) contacts are provided by Cys91, His94, and Cys162.

This sequence belongs to the GTP cyclohydrolase I family. As to quaternary structure, homomer.

The enzyme catalyses GTP + H2O = 7,8-dihydroneopterin 3'-triphosphate + formate + H(+). It functions in the pathway cofactor biosynthesis; 7,8-dihydroneopterin triphosphate biosynthesis; 7,8-dihydroneopterin triphosphate from GTP: step 1/1. The polypeptide is GTP cyclohydrolase 1 (Allorhizobium ampelinum (strain ATCC BAA-846 / DSM 112012 / S4) (Agrobacterium vitis (strain S4))).